Reading from the N-terminus, the 247-residue chain is Complement C1q subcomponent subunit A (247 aa).

Residues 1–24 (MEAPRGWLVIMISVLAVSLASSAA) form the signal peptide. A disordered region spans residues 26 to 116 (DTCRDLDGRD…NPGNIKDQRR (91 aa)). The segment covering 27–38 (TCRDLDGRDGAA) has biased composition (basic and acidic residues). One can recognise a Collagen-like domain in the interval 33-111 (GRDGAARKPG…KGIKGNPGNI (79 aa)). 2 positions are modified to 4-hydroxyproline: proline 41 and proline 47. Residue lysine 50 is modified to 5-hydroxylysine. O-linked (Gal...) hydroxylysine glycosylation is present at lysine 50. 2 positions are modified to 4-hydroxyproline: proline 56 and proline 59. Lysine 69 bears the 5-hydroxylysine mark. Lysine 69 carries O-linked (Gal...) hydroxylysine glycosylation. Residues proline 81 and proline 87 each carry the 4-hydroxyproline modification. Low complexity predominate over residues 98–109 (LPGLKGIKGNPG). At lysine 102 the chain carries 5-hydroxylysine. Residue lysine 102 is glycosylated (O-linked (Gal...) hydroxylysine). The region spanning 112–247 (KDQRRPAFSA…FSGFLIFPST (136 aa)) is the C1q domain. Cysteine 174 and cysteine 192 are joined by a disulfide. Glutamine 201 provides a ligand contact to Ca(2+).

In terms of assembly, core component of the complement C1 complex, a calcium-dependent complex composed of 1 molecule of the C1Q subcomplex, 2 molecules of C1R and 2 molecules of C1S. The C1Q subcomplex is composed 18 subunits: 3 chains of C1QA, C1QB, and C1QC trimerize to form 6 collagen-like triple helices connected to six globular ligand-recognition modules (C1q domain). Interacts with CR1 (via Sushi 24 and Sushi 25 domains). Interacts (via C-terminus) with CD33; this interaction activates CD33 inhibitory motifs. In terms of processing, O-linked glycans are assumed to be the Glc-Gal disaccharides typically found as secondary modifications of hydroxylated lysines in collagen-like domains.

The protein localises to the secreted. It localises to the cell surface. The C1Q subcomplex is inhibited by sulfated molecules, such as triterpenoid sulfates, heparan sulfate, or chondroitin sulfates. In terms of biological role, core component of the complement C1 complex, a multiprotein complex that initiates the classical pathway of the complement system, a cascade of proteins that leads to phagocytosis and breakdown of pathogens and signaling that strengthens the adaptive immune system. The classical complement pathway is initiated by the C1Q subcomplex of the C1 complex, which specifically binds IgG or IgM immunoglobulins complexed with antigens, forming antigen-antibody complexes on the surface of pathogens: C1QA, together with C1QB and C1QC, specifically recognizes and binds the Fc regions of IgG or IgM via its C1q domain. Immunoglobulin-binding activates the proenzyme C1R, which cleaves C1S, initiating the proteolytic cascade of the complement system. The C1Q subcomplex is activated by a hexamer of IgG complexed with antigens, while it is activated by a pentameric IgM. The C1Q subcomplex also recognizes and binds phosphatidylserine exposed on the surface of cells undergoing programmed cell death, possibly promoting activation of the complement system. This is Complement C1q subcomponent subunit A (C1QA) from Sus scrofa (Pig).